Consider the following 858-residue polypeptide: Elongation factor 2 (858 aa).

The region spanning 17–362 (ANIRNMSVIA…MITIHLPSPV (346 aa)) is the tr-type G domain. Position 26–33 (26–33 (AHVDHGKS)) interacts with GTP. At Thr54 the chain carries Phosphothreonine. Residue Thr57 is modified to Phosphothreonine; by EEF2K. Thr59 is subject to Phosphothreonine. Residue Lys152 is modified to N6-succinyllysine. GTP contacts are provided by residues 158–161 (NKMD) and 216–218 (SGL). Lys235 is subject to N6-acetyllysine. Position 239 is an N6-acetyllysine; alternate (Lys239). A Glycyl lysine isopeptide (Lys-Gly) (interchain with G-Cter in SUMO1); alternate cross-link involves residue Lys239. Tyr265 is modified (phosphotyrosine; by CSK). Position 272 is an N6-acetyllysine; alternate (Lys272). Lys272 carries the post-translational modification N6-succinyllysine; alternate. Position 275 is an N6-acetyllysine (Lys275). Residue Lys322 forms a Glycyl lysine isopeptide (Lys-Gly) (interchain with G-Cter in SUMO) linkage. At Ser325 the chain carries Phosphoserine. Tyr373 bears the Phosphotyrosine; by CSK mark. Thr435 is subject to Phosphothreonine. Residues Lys439 and Lys445 each carry the N6-acetyllysine modification. Ser502 bears the Phosphoserine mark. Lys525 is modified (N6,N6,N6-trimethyllysine; by EEF2KMT). Lys529 participates in a covalent cross-link: Glycyl lysine isopeptide (Lys-Gly) (interchain with G-Cter in SUMO). The residue at position 572 (Lys572) is an N6-succinyllysine. Ser595 carries the phosphoserine; by CDK2 modification. At Lys619 the chain carries N6-acetyllysine. Residue His715 is modified to Diphthamide.

It belongs to the TRAFAC class translation factor GTPase superfamily. Classic translation factor GTPase family. EF-G/EF-2 subfamily. As to quaternary structure, binds to 80S ribosomes. Actively translating ribosomes show mutually exclusive binding of eIF5a (EIF5A or EIF5A2) and EEF2/eEF2. Interacts with SERBP1; interaction sequesters EEF2/eEF2 at the A-site of the ribosome, thereby blocking the interaction sites of the mRNA-tRNA complex, promoting ribosome stabilization and hibernation. Interacts with HABP4; interaction takes place at the A-site of hibernating ribosomes and promotes ribosome stabilization. Component of the mRNA surveillance SURF complex, at least composed of ERF1, ERF3 (ERF3A or ERF3B), EEF2, UPF1/RENT1, SMG1, SMG8 and SMG9. Interacts with RBPMS2. Post-translationally, phosphorylation by EF-2 kinase completely inactivates EF-2; it requires prior phosphorylation by CDK2 at Ser-595 during mitotic prometaphase. Phosphorylation by CSK promotes SUMOylation, proteolytic cleavage, and nuclear translocation if the C-terminal fragment. Diphthamide is 2-[3-carboxyamido-3-(trimethyl-ammonio)propyl]histidine. In terms of processing, ISGylated. Post-translationally, proteolytically processed at two sites following phosphorylation by CSK. SUMOylated following phosphorylation by CSK, promotes proteolytic cleavage.

The protein localises to the cytoplasm. The protein resides in the nucleus. The catalysed reaction is GTP + H2O = GDP + phosphate + H(+). Catalyzes the GTP-dependent ribosomal translocation step during translation elongation. During this step, the ribosome changes from the pre-translocational (PRE) to the post-translocational (POST) state as the newly formed A-site-bound peptidyl-tRNA and P-site-bound deacylated tRNA move to the P and E sites, respectively. Catalyzes the coordinated movement of the two tRNA molecules, the mRNA and conformational changes in the ribosome. This chain is Elongation factor 2 (EEF2), found in Callithrix jacchus (White-tufted-ear marmoset).